A 351-amino-acid chain; its full sequence is L-threonine 3-dehydrogenase (351 aa).

A Zn(2+)-binding site is contributed by Cys42. Catalysis depends on charge relay system residues Thr44 and His47. Zn(2+)-binding residues include His67, Glu68, Cys97, Cys100, Cys103, and Cys111. NAD(+)-binding positions include Ile179, Asp199, Arg204, 266 to 268, and 291 to 292; these read LGL and IT.

This sequence belongs to the zinc-containing alcohol dehydrogenase family. As to quaternary structure, homotetramer. Zn(2+) serves as cofactor.

The protein resides in the cytoplasm. The catalysed reaction is L-threonine + NAD(+) = (2S)-2-amino-3-oxobutanoate + NADH + H(+). It functions in the pathway amino-acid degradation; L-threonine degradation via oxydo-reductase pathway; glycine from L-threonine: step 1/2. Catalyzes the NAD(+)-dependent oxidation of L-threonine to 2-amino-3-ketobutyrate. The sequence is that of L-threonine 3-dehydrogenase from Symbiobacterium thermophilum (strain DSM 24528 / JCM 14929 / IAM 14863 / T).